The following is a 374-amino-acid chain: Pectate lyase 3 (374 aa).

The first 22 residues, 1-22, serve as a signal peptide directing secretion; the sequence is MKYLLPSTAAGLLLLAAQPTMA. An intrachain disulfide couples Cys-93 to Cys-176. Ca(2+) contacts are provided by Asp-150, Asp-152, Glu-187, and Asp-191. Arg-239 is a catalytic residue. An intrachain disulfide couples Cys-350 to Cys-373.

It belongs to the polysaccharide lyase 1 family. PLADES subfamily. Requires Ca(2+) as cofactor.

It is found in the secreted. It catalyses the reaction Eliminative cleavage of (1-&gt;4)-alpha-D-galacturonan to give oligosaccharides with 4-deoxy-alpha-D-galact-4-enuronosyl groups at their non-reducing ends.. It participates in glycan metabolism; pectin degradation; 2-dehydro-3-deoxy-D-gluconate from pectin: step 2/5. Involved in maceration and soft-rotting of plant tissue. This Pectobacterium atrosepticum (strain SCRI 1043 / ATCC BAA-672) (Erwinia carotovora subsp. atroseptica) protein is Pectate lyase 3 (pel3).